Consider the following 179-residue polypeptide: UPF0227 protein Shew185_2404 (179 aa).

Belongs to the UPF0227 family.

This chain is UPF0227 protein Shew185_2404, found in Shewanella baltica (strain OS185).